Here is a 154-residue protein sequence, read N- to C-terminus: Peptide methionine sulfoxide reductase MsrB (154 aa).

Residues 28–150 (DQQWREQLSE…NSVSLIFNKI (123 aa)) enclose the MsrB domain. Zn(2+) contacts are provided by Cys-67, Cys-70, Cys-116, and Cys-119. Cys-139 (nucleophile) is an active-site residue.

This sequence belongs to the MsrB Met sulfoxide reductase family. The cofactor is Zn(2+).

It catalyses the reaction L-methionyl-[protein] + [thioredoxin]-disulfide + H2O = L-methionyl-(R)-S-oxide-[protein] + [thioredoxin]-dithiol. In Vibrio vulnificus (strain CMCP6), this protein is Peptide methionine sulfoxide reductase MsrB.